Consider the following 313-residue polypeptide: Maintenance of mitochondrial morphology protein 1 (313 aa).

Over 1-12 (MIHLPQGSFTQG) the chain is Lumenal. A helical membrane pass occupies residues 13 to 33 (LIVGQLLTLAIIYVFLRFFLF). Over 34–313 (CSPIPKSVAN…APQEESSNED (280 aa)) the chain is Cytoplasmic. Positions 42–63 (ANSPKQTGNETPDETPSTPLSN) are enriched in polar residues. The interval 42–65 (ANSPKQTGNETPDETPSTPLSNNK) is disordered. The SMP-LTD domain occupies 90 to 288 (EPESLDWFNV…SPQFQQIAIP (199 aa)).

This sequence belongs to the MMM1 family. Homodimer. Component of the ER-mitochondria encounter structure (ERMES) or MDM complex, composed of mmm1, mdm10, mdm12 and mdm34. A mmm1 homodimer associates with one molecule of mdm12 on each side in a pairwise head-to-tail manner, and the SMP-LTD domains of mmm1 and mdm12 generate a continuous hydrophobic tunnel for phospholipid trafficking.

It localises to the endoplasmic reticulum membrane. In terms of biological role, component of the ERMES/MDM complex, which serves as a molecular tether to connect the endoplasmic reticulum (ER) and mitochondria. Components of this complex are involved in the control of mitochondrial shape and protein biogenesis, and function in nonvesicular lipid trafficking between the ER and mitochondria. The mdm12-mmm1 subcomplex functions in the major beta-barrel assembly pathway that is responsible for biogenesis of all outer membrane beta-barrel proteins, and acts in a late step after the SAM complex. The mdm10-mdm12-mmm1 subcomplex further acts in the TOM40-specific pathway after the action of the mdm12-mmm1 complex. Essential for establishing and maintaining the structure of mitochondria and maintenance of mtDNA nucleoids. The protein is Maintenance of mitochondrial morphology protein 1 of Schizosaccharomyces pombe (strain 972 / ATCC 24843) (Fission yeast).